Here is a 335-residue protein sequence, read N- to C-terminus: Holliday junction branch migration complex subunit RuvB (335 aa).

A large ATPase domain (RuvB-L) region spans residues 4–184 (ADRLVSAEVL…FGIVQRLEFY (181 aa)). ATP contacts are provided by residues Ile-23, Arg-24, Gly-65, Lys-68, Thr-69, Thr-70, 131-133 (EDY), Arg-174, Tyr-184, and Arg-221. Thr-69 contributes to the Mg(2+) binding site. The small ATPAse domain (RuvB-S) stretch occupies residues 185 to 255 (NVDDLQSIVS…IATRALDMLS (71 aa)). Positions 258–335 (AAGFDYLDRK…RHFGMVRNQE (78 aa)) are head domain (RuvB-H). Residues Arg-294, Arg-313, and Arg-318 each coordinate DNA.

This sequence belongs to the RuvB family. In terms of assembly, homohexamer. Forms an RuvA(8)-RuvB(12)-Holliday junction (HJ) complex. HJ DNA is sandwiched between 2 RuvA tetramers; dsDNA enters through RuvA and exits via RuvB. An RuvB hexamer assembles on each DNA strand where it exits the tetramer. Each RuvB hexamer is contacted by two RuvA subunits (via domain III) on 2 adjacent RuvB subunits; this complex drives branch migration. In the full resolvosome a probable DNA-RuvA(4)-RuvB(12)-RuvC(2) complex forms which resolves the HJ.

The protein localises to the cytoplasm. The catalysed reaction is ATP + H2O = ADP + phosphate + H(+). Functionally, the RuvA-RuvB-RuvC complex processes Holliday junction (HJ) DNA during genetic recombination and DNA repair, while the RuvA-RuvB complex plays an important role in the rescue of blocked DNA replication forks via replication fork reversal (RFR). RuvA specifically binds to HJ cruciform DNA, conferring on it an open structure. The RuvB hexamer acts as an ATP-dependent pump, pulling dsDNA into and through the RuvAB complex. RuvB forms 2 homohexamers on either side of HJ DNA bound by 1 or 2 RuvA tetramers; 4 subunits per hexamer contact DNA at a time. Coordinated motions by a converter formed by DNA-disengaged RuvB subunits stimulates ATP hydrolysis and nucleotide exchange. Immobilization of the converter enables RuvB to convert the ATP-contained energy into a lever motion, pulling 2 nucleotides of DNA out of the RuvA tetramer per ATP hydrolyzed, thus driving DNA branch migration. The RuvB motors rotate together with the DNA substrate, which together with the progressing nucleotide cycle form the mechanistic basis for DNA recombination by continuous HJ branch migration. Branch migration allows RuvC to scan DNA until it finds its consensus sequence, where it cleaves and resolves cruciform DNA. The protein is Holliday junction branch migration complex subunit RuvB of Photorhabdus laumondii subsp. laumondii (strain DSM 15139 / CIP 105565 / TT01) (Photorhabdus luminescens subsp. laumondii).